Reading from the N-terminus, the 1231-residue chain is Chromosome-associated kinesin KIF4 (1231 aa).

The Kinesin motor domain occupies 9-337 (PVRVALRCRP…LRYADRARKI (329 aa)). An ATP-binding site is contributed by 88 to 95 (GQTGSGKT). The stretch at 351–1000 (ELNHLKQQVQ…IKQKLTLLQV (650 aa)) forms a coiled coil. Residue S395 is modified to Phosphoserine. The residue at position 800 (T800) is a Phosphothreonine. 3 positions are modified to phosphoserine: S802, S811, and S816. Residues 1001–1231 (ASKQKPHLTR…GCSPIQEESH (231 aa)) are globular. Positions 1189–1212 (HPELKSIASESQENKAIGKKKKRA) are disordered. 2 positions are modified to phosphoserine: S1224 and S1230.

It belongs to the TRAFAC class myosin-kinesin ATPase superfamily. Kinesin family. Chromokinesin subfamily. It depends on [2Fe-2S] cluster as a cofactor. [4Fe-4S] cluster is required as a cofactor. In terms of tissue distribution, expressed in pyramidal cells in juvenile hippocampus, granular cells in juvenile cerebellar cortex and in adult spleen.

Its subcellular location is the nucleus. The protein resides in the chromosome. It localises to the cytoplasm. It is found in the cytoskeleton. Its function is as follows. Iron-sulfur (Fe-S) cluster binding motor protein that has a role in chromosome segregation during mitosis. Required for mitotic chromosomal positioning and bipolar spindle stabilization. This Mus musculus (Mouse) protein is Chromosome-associated kinesin KIF4 (Kif4).